Here is a 198-residue protein sequence, read N- to C-terminus: Peptide deformylase (198 aa).

Positions 123 and 167 each coordinate Fe cation. Glutamate 168 is a catalytic residue. Histidine 171 contributes to the Fe cation binding site.

It belongs to the polypeptide deformylase family. Requires Fe(2+) as cofactor.

It catalyses the reaction N-terminal N-formyl-L-methionyl-[peptide] + H2O = N-terminal L-methionyl-[peptide] + formate. In terms of biological role, removes the formyl group from the N-terminal Met of newly synthesized proteins. Requires at least a dipeptide for an efficient rate of reaction. N-terminal L-methionine is a prerequisite for activity but the enzyme has broad specificity at other positions. The sequence is that of Peptide deformylase from Ureaplasma parvum serovar 3 (strain ATCC 27815 / 27 / NCTC 11736).